The following is a 189-amino-acid chain: Apolipoprotein D (189 aa).

The signal sequence occupies residues 1 to 20 (MVTMLMFLATLAGLFTTAKG). At glutamine 21 the chain carries Pyrrolidone carboxylic acid. 2 disulfides stabilise this stretch: cysteine 28–cysteine 134 and cysteine 61–cysteine 185. N-linked (GlcNAc...) asparagine glycosylation is found at asparagine 65 and asparagine 98.

Belongs to the calycin superfamily. Lipocalin family. As to quaternary structure, homodimer. As to expression, highest levels of expression in brain, testis, virgin mammary gland and salivary gland. Moderate levels in skeletal muscle, lactating mammary gland and thymus. Low levels in lung and lymph node. No expression in kidney, pancreas, liver or spleen.

The protein resides in the secreted. APOD occurs in the macromolecular complex with lecithin-transport and binding of bilin. Appears to be able to transport a variety of ligands in a number of different contexts. The polypeptide is Apolipoprotein D (Apod) (Mus musculus (Mouse)).